A 364-amino-acid chain; its full sequence is Paraneoplastic antigen Ma2 homolog (364 aa).

Residue alanine 2 is modified to N-acetylalanine. Residues glutamate 335–glycine 351 show a composition bias toward acidic residues. Positions glutamate 335–aspartate 364 are disordered.

The protein belongs to the PNMA family.

It localises to the nucleus. The protein localises to the nucleolus. The protein is Paraneoplastic antigen Ma2 homolog (PNMA2) of Bos taurus (Bovine).